Here is a 600-residue protein sequence, read N- to C-terminus: Aspartate--tRNA(Asp/Asn) ligase (600 aa).

E174 provides a ligand contact to L-aspartate. The segment at 198–201 is aspartate; it reads QLFK. L-aspartate is bound at residue R220. Residues 220–222 and Q229 contribute to the ATP site; that span reads RDE. H457 serves as a coordination point for L-aspartate. ATP is bound at residue E491. Residue R498 participates in L-aspartate binding. Residue 543–546 participates in ATP binding; that stretch reads GLDR.

It belongs to the class-II aminoacyl-tRNA synthetase family. Type 1 subfamily. In terms of assembly, homodimer.

It localises to the cytoplasm. The catalysed reaction is tRNA(Asx) + L-aspartate + ATP = L-aspartyl-tRNA(Asx) + AMP + diphosphate. Functionally, aspartyl-tRNA synthetase with relaxed tRNA specificity since it is able to aspartylate not only its cognate tRNA(Asp) but also tRNA(Asn). Reaction proceeds in two steps: L-aspartate is first activated by ATP to form Asp-AMP and then transferred to the acceptor end of tRNA(Asp/Asn). This is Aspartate--tRNA(Asp/Asn) ligase from Burkholderia pseudomallei (strain 668).